Here is a 629-residue protein sequence, read N- to C-terminus: MPSTRNIEKHNDSNPTLRALSLSALGIVYGDIGTSPLYTFKTVILLAGGGTPDVTTIMGSASLIIWTLIIIASVKYICFALRIDNDGEGGILALMSLLSLKLKQKPFIIAVGLMGAALIYGDGTITPAISVLSAVEGLEILSPSLKYYVLPIAITILITLFAIQSKGTTTIGKAFGPVMAFWFLTIGILGARGVIQHPFVLAAINPVYGLNFLFSNGATGFFILCGVFLCATGAEALYADLGHFGTAPIRCTWFGLAFPSLIFNYLGQAALVLEGASTEHNIFYMLCPSDFLLPLIILSTVATIIASQAIITGAFSMTRQAMQLGWLPRLRVTQTSSEGYGQIYIGVVNWLLMLATLGLIIGFGSSEKLAAAYGIAVSATMLCTTVLLFIALHKLWKWNIITSGLVAGLFMIVDASFFAANLTKFINGGYIPITLAIIIYSMMYIWHKGYKTIAIKQKEKNITVDSFLDSIQKEGVVRVSKTAVFLTSKEQDIPPTLVWHVKKNHVLQDKVIILNINNLSIPWCKPGDQLQIVETGAGIWHAVANYGFMEQPHIPKLLKKLEAQGYDINIKDITYYIGHETIFVRNARHTLSKYIKILFVFMHRNALPMSNYFHLPPESVFEIGRQIEI.

A run of 12 helical transmembrane segments spans residues 20-40 (LSLS…LYTF), 54-74 (VTTI…IASV), 106-126 (PFII…GTIT), 143-163 (PSLK…LFAI), 171-191 (IGKA…ILGA), 212-232 (FLFS…LCAT), 253-273 (WFGL…ALVL), 291-311 (FLLP…QAII), 343-363 (IYIG…IIGF), 372-392 (AYGI…FIAL), 400-420 (IITS…FFAA), and 425-445 (FING…MMYI).

This sequence belongs to the HAK/KUP transporter (TC 2.A.72) family.

It is found in the cell inner membrane. It carries out the reaction K(+)(in) + H(+)(in) = K(+)(out) + H(+)(out). Transport of potassium into the cell. Likely operates as a K(+):H(+) symporter. This Legionella pneumophila (strain Paris) protein is Probable potassium transport system protein Kup 3.